The following is a 218-amino-acid chain: MSGGLAPSKSTVYVSNLPFSLTNNDLHRIFSKYGKVVKVTILKDKDSRKSKGVSFVLFLDKESAQNCVRGLNNKQLFGRAIKASIAKDNGRATEFIRRRNYTDKSRCYECGDTGHLSYACPKNMLGEREPPQKKEKKKRKRLVEEEEEEVVEEEESEDEGEDPALDSLSQAIAFQQARIDEEKNKYRHDPAEASTSEDSRRPRIKKSTYFSDEDELSD.

The region spanning 10–88 (STVYVSNLPF…RAIKASIAKD (79 aa)) is the RRM domain. The CCHC-type zinc-finger motif lies at 105–122 (SRCYECGDTGHLSYACPK). Residues 119 to 218 (ACPKNMLGER…YFSDEDELSD (100 aa)) are disordered. Residues 132-188 (QKKEKKKRKRLVEEEEEEVVEEEESEDEGEDPALDSLSQAIAFQQARIDEEKNKYRH) adopt a coiled-coil conformation. The segment covering 144 to 164 (EEEEEEVVEEEESEDEGEDPA) has biased composition (acidic residues). The segment covering 178 to 201 (RIDEEKNKYRHDPAEASTSEDSRR) has biased composition (basic and acidic residues).

In terms of assembly, component of the U11/U12 snRNPs that are part of the U12-type spliceosome.

Its subcellular location is the nucleus. The polypeptide is Zinc finger CCHC-type and RNA-binding motif-containing protein 1 (zcrb1) (Xenopus laevis (African clawed frog)).